Reading from the N-terminus, the 97-residue chain is MDITDIRIKKVDSKNSGSKLLAYVAVTFDNCLVLHNIRVIKGQKGVFIAMPNRRTRVGEYKDIVHPISQDFRKALQTSIFKEYIRENPADLELELDF.

It belongs to the SpoVG family.

Functionally, could be involved in septation. This Borreliella burgdorferi (strain ATCC 35210 / DSM 4680 / CIP 102532 / B31) (Borrelia burgdorferi) protein is Putative septation protein SpoVG.